We begin with the raw amino-acid sequence, 69 residues long: Large ribosomal subunit protein bL32c (69 aa).

It belongs to the bacterial ribosomal protein bL32 family.

It localises to the plastid. It is found in the chloroplast. The protein is Large ribosomal subunit protein bL32c (rpl32) of Marchantia polymorpha (Common liverwort).